The primary structure comprises 604 residues: Structure-specific endonuclease subunit MUS81 (604 aa).

Disordered regions lie at residues 93–138, 227–248, and 253–272; these read AAVH…REYV, KLDSEETGTRHEDVDSQDGQNV, and LEEEDEDEEKESWSSERPAV. Composition is skewed to basic and acidic residues over residues 116–128 and 227–240; these read EHTKLTQKEVRKE and KLDSEETGTRHEDV. The winged helix domain (WHD); critical for endonuclease activity stretch occupies residues 138 to 254; the sequence is VPQKRSGGYA…GQNVVDLTLE (117 aa). The span at 253-262 shows a compositional bias: acidic residues; the sequence is LEEEDEDEEK. In terms of domain architecture, ERCC4 spans 314 to 423; it reads VLCVDLCETT…KPIYLVEECG (110 aa). Active-site residues include D318, E321, and D353. 5 residues coordinate Mg(2+): D318, E321, D353, E384, and R385. The helix-hairpin-helix (2HhH); involved in DNA recognition and bending stretch occupies residues 524–598; that stretch reads VREVFARQLM…LSRTIYQLYC (75 aa).

It belongs to the XPF family. In terms of assembly, part of the heterodimeric DNA structure-specific endonuclease complex MUS81-EME1. Part of the heterodimeric DNA structure-specific endonuclease complex MUS81-EME2. Requires Mg(2+) as cofactor.

It is found in the nucleus. Its subcellular location is the nucleolus. Functionally, catalytic subunit of two functionally distinct, structure-specific, heterodimeric DNA endonucleases MUS81-EME1 and MUS81-EME2 that are involved in the maintenance of genome stability. Both endonucleases have essentially the same substrate specificity though MUS81-EME2 is more active than its MUS81-EME1 counterpart. Both cleave 3'-flaps and nicked Holliday junctions, and exhibit limited endonuclease activity with 5' flaps and nicked double-stranded DNAs. MUS81-EME2 which is active during the replication of DNA is more specifically involved in replication fork processing. Replication forks frequently encounter obstacles to their passage, including DNA base lesions, DNA interstrand cross-links, difficult-to-replicate sequences, transcription bubbles, or tightly bound proteins. One mechanism for the restart of a stalled replication fork involves nucleolytic cleavage mediated by the MUS81-EME2 endonuclease. By acting upon the stalled fork, MUS81-EME2 generates a DNA double-strand break (DSB) that can be repaired by homologous recombination, leading to the restoration of an active fork. MUS81-EME2 could also function in telomere maintenance. MUS81-EME1, on the other hand, is active later in the cell cycle and functions in the resolution of mitotic recombination intermediates including the Holliday junctions, the four-way DNA intermediates that form during homologous recombination. The chain is Structure-specific endonuclease subunit MUS81 (mus81) from Danio rerio (Zebrafish).